The sequence spans 616 residues: Dihydroxy-acid dehydratase (616 aa).

Position 81 (D81) interacts with Mg(2+). [2Fe-2S] cluster is bound at residue C122. 2 residues coordinate Mg(2+): D123 and K124. The residue at position 124 (K124) is an N6-carboxylysine. C195 is a binding site for [2Fe-2S] cluster. E491 contacts Mg(2+). S517 functions as the Proton acceptor in the catalytic mechanism.

The protein belongs to the IlvD/Edd family. Homodimer. The cofactor is [2Fe-2S] cluster. Mg(2+) is required as a cofactor.

It catalyses the reaction (2R)-2,3-dihydroxy-3-methylbutanoate = 3-methyl-2-oxobutanoate + H2O. The catalysed reaction is (2R,3R)-2,3-dihydroxy-3-methylpentanoate = (S)-3-methyl-2-oxopentanoate + H2O. Its pathway is amino-acid biosynthesis; L-isoleucine biosynthesis; L-isoleucine from 2-oxobutanoate: step 3/4. The protein operates within amino-acid biosynthesis; L-valine biosynthesis; L-valine from pyruvate: step 3/4. In terms of biological role, functions in the biosynthesis of branched-chain amino acids. Catalyzes the dehydration of (2R,3R)-2,3-dihydroxy-3-methylpentanoate (2,3-dihydroxy-3-methylvalerate) into 2-oxo-3-methylpentanoate (2-oxo-3-methylvalerate) and of (2R)-2,3-dihydroxy-3-methylbutanoate (2,3-dihydroxyisovalerate) into 2-oxo-3-methylbutanoate (2-oxoisovalerate), the penultimate precursor to L-isoleucine and L-valine, respectively. The protein is Dihydroxy-acid dehydratase of Salmonella heidelberg (strain SL476).